The following is a 306-amino-acid chain: Ribokinase (306 aa).

Residues 12-14 (NAD), 40-44 (GKGAN), and Glu-141 contribute to the substrate site. Residues Asn-185 and 221–226 (TLGAKG) contribute to the ATP site. K(+)-binding residues include Asp-247 and Thr-249. An ATP-binding site is contributed by 252-253 (GD). Position 253 (Asp-253) interacts with substrate. Residue Asp-253 is the Proton acceptor of the active site. Residues Ser-283, Lys-286, Gly-288, and Ser-292 each coordinate K(+).

Belongs to the carbohydrate kinase PfkB family. Ribokinase subfamily. In terms of assembly, homodimer. The cofactor is Mg(2+).

The protein localises to the cytoplasm. The catalysed reaction is D-ribose + ATP = D-ribose 5-phosphate + ADP + H(+). Its pathway is carbohydrate metabolism; D-ribose degradation; D-ribose 5-phosphate from beta-D-ribopyranose: step 2/2. With respect to regulation, activated by a monovalent cation that binds near, but not in, the active site. The most likely occupant of the site in vivo is potassium. Ion binding induces a conformational change that may alter substrate affinity. Functionally, catalyzes the phosphorylation of ribose at O-5 in a reaction requiring ATP and magnesium. The resulting D-ribose-5-phosphate can then be used either for sythesis of nucleotides, histidine, and tryptophan, or as a component of the pentose phosphate pathway. This Haemophilus influenzae (strain ATCC 51907 / DSM 11121 / KW20 / Rd) protein is Ribokinase.